Here is a 911-residue protein sequence, read N- to C-terminus: Transcription factor E2F7 (911 aa).

Ser94 carries the phosphoserine modification. The DNA-binding element occupies 141-210; that stretch reads RKQKSLGLLC…VAKNQYSWHG (70 aa). 3 disordered regions span residues 239 to 281, 409 to 433, and 565 to 706; these read QKEL…ANSR, SFNSEQASERTQRKVNSEPSSPYRQ, and SPGS…SPLQ. Over residues 243 to 257 the composition is skewed to basic and acidic residues; the sequence is NPIDHKSGERRRDGC. Residues 281–366 mediate DNA binding; the sequence is RKDKSLKIMS…GRKPAFKWIG (86 aa). Residue Ser409 is modified to Phosphoserine. The span at 415-424 shows a compositional bias: basic and acidic residues; sequence ASERTQRKVN. A compositionally biased stretch (gly residues) spans 566–579; sequence PGSGSGSGSVGGGS. The segment covering 599–621 has biased composition (basic and acidic residues); sequence ERRLQEEEEEPATKRQCRDHEDG. Residues 669–687 show a composition bias toward polar residues; the sequence is KATTNGFVSSEWGNPCSNT. The span at 688-698 shows a compositional bias: basic and acidic residues; it reads EIEKPSEENES. Position 840 is a phosphoserine (Ser840). A disordered region spans residues 873-911; it reads FFKTPGSLGDPVLRRKERNQSRSSSSAQRRLEISSGGTD.

This sequence belongs to the E2F/DP family. In terms of assembly, homodimer and heterodimer: mainly forms homodimers and, to a lesser extent, heterodimers with E2F8. Dimerization is important for DNA-binding. Interacts with HIF1A. Interacts with MN1.

The protein resides in the nucleus. Functionally, atypical E2F transcription factor that participates in various processes such as angiogenesis, polyploidization of specialized cells and DNA damage response. Mainly acts as a transcription repressor that binds DNA independently of DP proteins and specifically recognizes the E2 recognition site 5'-TTTC[CG]CGC-3'. Directly represses transcription of classical E2F transcription factors such as E2F1. Acts as a regulator of S-phase by recognizing and binding the E2-related site 5'-TTCCCGCC-3' and mediating repression of G1/S-regulated genes. Plays a key role in polyploidization of cells in placenta and liver by regulating the endocycle, probably by repressing genes promoting cytokinesis and antagonizing action of classical E2F proteins (E2F1, E2F2 and/or E2F3). Required for placental development by promoting polyploidization of trophoblast giant cells. Also involved in DNA damage response: up-regulated by p53/TP53 following genotoxic stress and acts as a downstream effector of p53/TP53-dependent repression by mediating repression of indirect p53/TP53 target genes involved in DNA replication. Acts as a promoter of sprouting angiogenesis, possibly by acting as a transcription activator: associates with HIF1A, recognizes and binds the VEGFA promoter, which is different from canonical E2 recognition site, and activates expression of the VEGFA gene. Acts as a negative regulator of keratinocyte differentiation. In Bos taurus (Bovine), this protein is Transcription factor E2F7 (E2F7).